The following is an 876-amino-acid chain: Xylosyltransferase oxt (876 aa).

Over 1–14 the chain is Cytoplasmic; sequence MEQSVSARWLKRYR. Residues 15–35 traverse the membrane as a helical; Signal-anchor for type II membrane protein segment; it reads AFFLILLLIVAIQLFLAYKSL. The Lumenal segment spans residues 36 to 876; it reads DIVGGGSGSG…PKSDVDALLK (841 aa). A disordered region spans residues 48–67; the sequence is AAEAPASPPPPHAQARVQPP. 4 disulfide bridges follow: C83–C111, C127–C465, C484–C497, and C486–C495. N-linked (GlcNAc...) asparagine glycans are attached at residues N131 and N135. Residues 134 to 228 form the WSC domain; it reads ANVSLGCFKD…FYAMNIYETG (95 aa). Residues D283 and 312–314 contribute to the UDP-alpha-D-xylose site; that span reads TIW. N342 carries N-linked (GlcNAc...) asparagine glycosylation. Position 415 to 416 (415 to 416) interacts with UDP-alpha-D-xylose; it reads DW. UDP-alpha-D-xylose-binding positions include S498 and 522–523; that span reads RK. N696 and N725 each carry an N-linked (GlcNAc...) asparagine glycan. A disulfide bridge links C842 with C855.

Belongs to the glycosyltransferase 14 family. XylT subfamily. Ca(2+) is required as a cofactor. Requires Mn(2+) as cofactor. Mg(2+) serves as cofactor.

The protein resides in the endoplasmic reticulum membrane. The protein localises to the golgi apparatus membrane. It carries out the reaction UDP-alpha-D-xylose + L-seryl-[protein] = 3-O-(beta-D-xylosyl)-L-seryl-[protein] + UDP + H(+). It functions in the pathway glycan metabolism; chondroitin sulfate biosynthesis. It participates in glycan metabolism; heparan sulfate biosynthesis. Its function is as follows. Catalyzes the first step in biosynthesis of glycosaminoglycan. Transfers D-xylose from UDP-D-xylose to specific serine residues of the core protein. This Drosophila melanogaster (Fruit fly) protein is Xylosyltransferase oxt.